A 176-amino-acid polypeptide reads, in one-letter code: Cytochrome b (176 aa).

A run of 3 helical transmembrane segments spans residues 33–53, 77–98, and 113–133; these read FGSL…FLAM, WLLR…YLHI, and WNVG…GYVL. Heme b is bound by residues His-83 and His-97.

The protein belongs to the cytochrome b family. In terms of assembly, the cytochrome bc1 complex contains 11 subunits: 3 respiratory subunits (MT-CYB, CYC1 and UQCRFS1), 2 core proteins (UQCRC1 and UQCRC2) and 6 low-molecular weight proteins (UQCRH/QCR6, UQCRB/QCR7, UQCRQ/QCR8, UQCR10/QCR9, UQCR11/QCR10 and a cleavage product of UQCRFS1). This cytochrome bc1 complex then forms a dimer. Requires heme b as cofactor.

It is found in the mitochondrion inner membrane. Its function is as follows. Component of the ubiquinol-cytochrome c reductase complex (complex III or cytochrome b-c1 complex) that is part of the mitochondrial respiratory chain. The b-c1 complex mediates electron transfer from ubiquinol to cytochrome c. Contributes to the generation of a proton gradient across the mitochondrial membrane that is then used for ATP synthesis. The chain is Cytochrome b (MT-CYB) from Eumops glaucinus (Wagner's mastiff bat).